Reading from the N-terminus, the 80-residue chain is Toxin Acra I-3 (80 aa).

An N-terminal signal peptide occupies residues 1–22 (MMKLVLLSVIVILFSLIGSIHG). One can recognise an LCN-type CS-alpha/beta domain in the interval 25-80 (VPGNYPLDSSGNKYPCTVLGDNQSCIDVCKKHGVKYGYCYGFKCWCEYLKDKNVSL). Cystine bridges form between C40–C63, C49–C68, and C53–C70.

It belongs to the long (3 C-C) scorpion toxin superfamily. Sodium/Potassium channel inhibitor family. In terms of tissue distribution, expressed by the venom gland.

Its subcellular location is the secreted. In terms of biological role, probable neurotoxin that inhibits ion channels. Is toxic to mice. The protein is Toxin Acra I-3 of Androctonus crassicauda (Arabian fat-tailed scorpion).